We begin with the raw amino-acid sequence, 131 residues long: Arsenate reductase (131 aa).

Catalysis depends on nucleophile residues Cys-10, Cys-82, and Cys-89. Intrachain disulfides connect Cys-10–Cys-82 and Cys-82–Cys-89.

It belongs to the low molecular weight phosphotyrosine protein phosphatase family. Thioredoxin-coupled ArsC subfamily.

It is found in the cytoplasm. It carries out the reaction arsenate + [thioredoxin]-dithiol + H(+) = arsenite + [thioredoxin]-disulfide + H2O. In terms of biological role, catalyzes the reduction of arsenate [As(V)] to arsenite [As(III)]. This chain is Arsenate reductase, found in Staphylococcus aureus (strain N315).